Here is a 122-residue protein sequence, read N- to C-terminus: Large ribosomal subunit protein uL14 (122 aa).

It belongs to the universal ribosomal protein uL14 family. Part of the 50S ribosomal subunit. Forms a cluster with proteins L3 and L19. In the 70S ribosome, L14 and L19 interact and together make contacts with the 16S rRNA in bridges B5 and B8.

Its function is as follows. Binds to 23S rRNA. Forms part of two intersubunit bridges in the 70S ribosome. This Thioalkalivibrio sulfidiphilus (strain HL-EbGR7) protein is Large ribosomal subunit protein uL14.